A 264-amino-acid chain; its full sequence is Phosphonoacetaldehyde hydrolase (264 aa).

The Nucleophile role is filled by aspartate 9. Positions 9 and 11 each coordinate Mg(2+). The active-site Schiff-base intermediate with substrate is the lysine 50. Aspartate 183 provides a ligand contact to Mg(2+).

The protein belongs to the HAD-like hydrolase superfamily. PhnX family. In terms of assembly, homodimer. Mg(2+) serves as cofactor.

The enzyme catalyses phosphonoacetaldehyde + H2O = acetaldehyde + phosphate + H(+). Its function is as follows. Involved in phosphonate degradation. In Bacillus cereus (strain AH820), this protein is Phosphonoacetaldehyde hydrolase.